The primary structure comprises 129 residues: Phosphoribosyl-AMP cyclohydrolase (129 aa).

Aspartate 94 is a Mg(2+) binding site. Cysteine 95 lines the Zn(2+) pocket. Mg(2+)-binding residues include aspartate 96 and aspartate 98. Zn(2+) contacts are provided by cysteine 111 and cysteine 118.

It belongs to the PRA-CH family. In terms of assembly, homodimer. It depends on Mg(2+) as a cofactor. Zn(2+) serves as cofactor.

It localises to the cytoplasm. It carries out the reaction 1-(5-phospho-beta-D-ribosyl)-5'-AMP + H2O = 1-(5-phospho-beta-D-ribosyl)-5-[(5-phospho-beta-D-ribosylamino)methylideneamino]imidazole-4-carboxamide. The protein operates within amino-acid biosynthesis; L-histidine biosynthesis; L-histidine from 5-phospho-alpha-D-ribose 1-diphosphate: step 3/9. Its function is as follows. Catalyzes the hydrolysis of the adenine ring of phosphoribosyl-AMP. The protein is Phosphoribosyl-AMP cyclohydrolase of Corynebacterium efficiens (strain DSM 44549 / YS-314 / AJ 12310 / JCM 11189 / NBRC 100395).